The sequence spans 193 residues: Phosphoheptose isomerase (193 aa).

Residues 37–193 (LADSFKVGGK…QLIEKEMVKA (157 aa)) enclose the SIS domain. Residue 52-54 (NGG) participates in substrate binding. H61 and E65 together coordinate Zn(2+). Substrate-binding positions include E65, 93–94 (ND), 119–121 (STS), S124, and Q172. 2 residues coordinate Zn(2+): Q172 and H180.

This sequence belongs to the SIS family. GmhA subfamily. In terms of assembly, homotetramer. The cofactor is Zn(2+).

It localises to the cytoplasm. It catalyses the reaction 2 D-sedoheptulose 7-phosphate = D-glycero-alpha-D-manno-heptose 7-phosphate + D-glycero-beta-D-manno-heptose 7-phosphate. Its pathway is carbohydrate biosynthesis; D-glycero-D-manno-heptose 7-phosphate biosynthesis; D-glycero-alpha-D-manno-heptose 7-phosphate and D-glycero-beta-D-manno-heptose 7-phosphate from sedoheptulose 7-phosphate: step 1/1. It participates in bacterial outer membrane biogenesis; LPS core biosynthesis. Its function is as follows. Catalyzes the isomerization of sedoheptulose 7-phosphate in D-glycero-D-manno-heptose 7-phosphate. The sequence is that of Phosphoheptose isomerase from Photorhabdus laumondii subsp. laumondii (strain DSM 15139 / CIP 105565 / TT01) (Photorhabdus luminescens subsp. laumondii).